A 99-amino-acid chain; its full sequence is Small integral membrane protein 14 (99 aa).

Topologically, residues 1–49 (MAEGGFDPCECVCSHEHAMRRLINLLRQSQSYCTDTECLQELPGPSGDN) are lumenal. The helical transmembrane segment at 50-70 (GISVTMILVAWMVIALILFLL) threads the bilayer. Topologically, residues 71–99 (RPPNLRGSNLPGKPTSPHNGQDPPAPPVD) are cytoplasmic. Residues 77-99 (GSNLPGKPTSPHNGQDPPAPPVD) form a disordered region.

Its subcellular location is the endoplasmic reticulum membrane. The polypeptide is Small integral membrane protein 14 (SMIM14) (Pongo abelii (Sumatran orangutan)).